Consider the following 609-residue polypeptide: MCGIVGAVAQRDIAEILIEGLRRLEYRGYDSAGLAVVDNEKNMFRLREVGKVQVLADEVDKQPVLGGTGIAHTRWATHGEPNEKNAHPHVSDYIAVVHNGIIENYEELRVQLIALGYQFISDTDTEVIAHLVHWEQKQGGTLLEAIQRVIPRLRGAYGAVIMDSRDPGTIIAARSGSPLVIGLGVGENFLASDQLALLPVTRRFIFLEEGDIAEVTRRTVRIFNTQGKPVEREQIESNIQYDAGDKGIYRHYMQKEIYEQPMAIKSTLERRLSHGQVDLSELGPNAAKLLAKVEHIQIVACGTSYNAGMVSRYWFEALAGIPCDVEIASEFRYRKSARRSGSLLITLSQSGETADTLAALRLSKELGYLTSLTVCNVAGSSLVRESDFALMTKAGAEIGVASTKAFTTQLTVLLMLVAYLGRLKGVDAEQEQEIVHALHALPSRIEGMLSKDKIIEVLAEDFSDKHHALFLGRGDQYPIAVEGALKLKEISYIHAEAYAAGELKHGPLALIDADMPVIIVAPNNELLEKLKSNIEEVRARGGLLYVFADQDAGFTDSEGMKIIPLPHVEELIAPIFYTVPLQLLSYHVALIKGTDVDQPRNLAKSVTVE.

Cys-2 (nucleophile; for GATase activity) is an active-site residue. The Glutamine amidotransferase type-2 domain occupies 2–218 (CGIVGAVAQR…EGDIAEVTRR (217 aa)). SIS domains are found at residues 286 to 426 (AAKL…LKGV) and 458 to 599 (LAED…VDQP). Lys-604 acts as the For Fru-6P isomerization activity in catalysis.

In terms of assembly, homodimer.

The protein localises to the cytoplasm. The catalysed reaction is D-fructose 6-phosphate + L-glutamine = D-glucosamine 6-phosphate + L-glutamate. Its function is as follows. Catalyzes the first step in hexosamine metabolism, converting fructose-6P into glucosamine-6P using glutamine as a nitrogen source. The protein is Glutamine--fructose-6-phosphate aminotransferase [isomerizing] of Photorhabdus laumondii subsp. laumondii (strain DSM 15139 / CIP 105565 / TT01) (Photorhabdus luminescens subsp. laumondii).